The chain runs to 99 residues: Nucleoid-associated protein EbfC (99 aa).

This sequence belongs to the YbaB/EbfC family. Homodimer.

It is found in the cytoplasm. The protein localises to the nucleoid. In terms of biological role, binds to DNA and alters its conformation. May be involved in regulation of gene expression, nucleoid organization and DNA protection. The sequence is that of Nucleoid-associated protein EbfC from Borrelia duttonii (strain Ly).